Reading from the N-terminus, the 539-residue chain is Chaperonin GroEL 1 (539 aa).

Residues 29-32 (TLGP), 86-90 (DGTTT), G413, and D493 each bind ATP.

It belongs to the chaperonin (HSP60) family. As to quaternary structure, forms a cylinder of 14 subunits composed of two heptameric rings stacked back-to-back. Interacts with the co-chaperonin GroES.

It localises to the cytoplasm. It carries out the reaction ATP + H2O + a folded polypeptide = ADP + phosphate + an unfolded polypeptide.. Together with its co-chaperonin GroES, plays an essential role in assisting protein folding. The GroEL-GroES system forms a nano-cage that allows encapsulation of the non-native substrate proteins and provides a physical environment optimized to promote and accelerate protein folding. This Acidothermus cellulolyticus (strain ATCC 43068 / DSM 8971 / 11B) protein is Chaperonin GroEL 1.